Here is a 347-residue protein sequence, read N- to C-terminus: L-threonine 3-dehydrogenase (347 aa).

C42 contacts Zn(2+). Active-site charge relay system residues include T44 and H47. Positions 67, 68, 97, 100, 103, and 111 each coordinate Zn(2+). NAD(+)-binding positions include I180, D200, R205, 267-269 (LSL), and 292-293 (IT).

The protein belongs to the zinc-containing alcohol dehydrogenase family. As to quaternary structure, homotetramer. The cofactor is Zn(2+).

The protein localises to the cytoplasm. The catalysed reaction is L-threonine + NAD(+) = (2S)-2-amino-3-oxobutanoate + NADH + H(+). It participates in amino-acid degradation; L-threonine degradation via oxydo-reductase pathway; glycine from L-threonine: step 1/2. Its function is as follows. Catalyzes the NAD(+)-dependent oxidation of L-threonine to 2-amino-3-ketobutyrate. The chain is L-threonine 3-dehydrogenase from Bacillus velezensis (strain DSM 23117 / BGSC 10A6 / LMG 26770 / FZB42) (Bacillus amyloliquefaciens subsp. plantarum).